The sequence spans 63 residues: uncharacterized protein (63 aa).

A disordered region spans residues 35-63; it reads PKPDSLISEHPTAQEAMDAKKRYEDPDKE. Residues 51-63 show a composition bias toward basic and acidic residues; it reads MDAKKRYEDPDKE.

This is an uncharacterized protein from Escherichia coli O157:H7.